Reading from the N-terminus, the 239-residue chain is Succinate dehydrogenase [ubiquinone] iron-sulfur subunit (239 aa).

One can recognise a 2Fe-2S ferredoxin-type domain in the interval 11–100 (FKVYRWNPDK…EMKIYPLPHM (90 aa)). [2Fe-2S] cluster contacts are provided by Cys61, Cys66, Cys69, and Cys81. Residues 141 to 171 (DREKLDGLYECVLCACCSTSCPSYWWNSDKY) enclose the 4Fe-4S ferredoxin-type domain. [4Fe-4S] cluster contacts are provided by Cys151, Cys154, and Cys157. Cys161 contacts [3Fe-4S] cluster. Position 166 (Trp166) interacts with a ubiquinone. Residues Cys208 and Cys214 each coordinate [3Fe-4S] cluster. Position 218 (Cys218) interacts with [4Fe-4S] cluster.

This sequence belongs to the succinate dehydrogenase/fumarate reductase iron-sulfur protein family. In terms of assembly, component of complex II composed of four subunits: a flavoprotein (FP), an iron-sulfur protein (IP), and a cytochrome b composed of a large and a small subunit. [2Fe-2S] cluster serves as cofactor. [3Fe-4S] cluster is required as a cofactor. Requires [4Fe-4S] cluster as cofactor.

It is found in the mitochondrion inner membrane. It catalyses the reaction a quinone + succinate = fumarate + a quinol. It functions in the pathway carbohydrate metabolism; tricarboxylic acid cycle; fumarate from succinate (eukaryal route): step 1/1. Its function is as follows. Iron-sulfur protein (IP) subunit of succinate dehydrogenase (SDH) that is involved in complex II of the mitochondrial electron transport chain and is responsible for transferring electrons from succinate to ubiquinone (coenzyme Q). The sequence is that of Succinate dehydrogenase [ubiquinone] iron-sulfur subunit (SDH2) from Reclinomonas americana.